We begin with the raw amino-acid sequence, 350 residues long: Outer membrane protein A (350 aa).

An N-terminal signal peptide occupies residues M1–A21. The next 8 beta stranded transmembrane spans lie at T27–S37, Q59–V70, L74–W82, Q100–P111, L116–G124, P146–A155, I160–Q167, and M186–R194. A run of 4 repeats spans residues A205–P206, A207–P208, A209–P210, and A211–P212. The tract at residues A205–P212 is 4 X 2 AA tandem repeats of A-P. The OmpA-like domain maps to V214–K342. C315 and C327 form a disulfide bridge.

It belongs to the outer membrane OOP (TC 1.B.6) superfamily. OmpA family. In terms of assembly, monomer and homodimer.

The protein resides in the cell outer membrane. In terms of biological role, with TolR probably plays a role in maintaining the position of the peptidoglycan cell wall in the periplasm. Acts as a porin with low permeability that allows slow penetration of small solutes; an internal gate slows down solute passage. Required for conjugation with F-type plasmids; probably serves as the mating receptor on recipient cells. The polypeptide is Outer membrane protein A (Klebsiella aerogenes (Enterobacter aerogenes)).